The sequence spans 365 residues: Phosphatidylcholine:ceramide cholinephosphotransferase 2 (365 aa).

Residues 9-50 (LEGHLESQTNNSTNTYTSPTEAVEEEDKNGKGKPKTLSNGLR) form a disordered region. Positions 15 to 28 (SQTNNSTNTYTSPT) are enriched in low complexity. 5 consecutive transmembrane segments (helical) span residues 80–100 (GIAF…ITVV), 128–148 (FSVS…QWLF), 159–179 (FFFI…VTTL), 219–239 (ILCG…TYLF), and 248–268 (FWWY…CILV). H229 is a catalytic residue. Active-site residues include H272 and D276. A helical transmembrane segment spans residues 273-290 (YTVDVIIAYYITTRLFWW). Residues 291–365 (YHSMANEKNL…KIGEDNEKST (75 aa)) lie on the Cytoplasmic side of the membrane. 4 S-palmitoyl cysteine lipidation sites follow: C331, C332, C343, and C348.

The protein belongs to the sphingomyelin synthase family. Palmitoylated on Cys-331, Cys-332, Cys-343 and Cys-348; which plays an important role in plasma membrane localization. In terms of tissue distribution, expression restricted to late round spermatids and elongating spermatids but not detected in late elongate spermatids and Sertoli cells (at protein level).

The protein localises to the cell membrane. It localises to the golgi apparatus membrane. It carries out the reaction an N-acylsphing-4-enine + a 1,2-diacyl-sn-glycero-3-phosphocholine = a sphingomyelin + a 1,2-diacyl-sn-glycerol. It catalyses the reaction an N-acylsphinganine + a 1,2-diacyl-sn-glycero-3-phosphocholine = an N-acylsphinganine-1-phosphocholine + a 1,2-diacyl-sn-glycerol. The catalysed reaction is an N-acyl-(4R)-4-hydroxysphinganine + a 1,2-diacyl-sn-glycero-3-phosphocholine = an N-acyl-(4R)-4-hydroxysphinganine-phosphocholine + a 1,2-diacyl-sn-glycerol. The enzyme catalyses an N-acylsphing-4-enine + a 1,2-diacyl-sn-glycero-3-phosphoethanolamine = an N-acylsphing-4-enine 1-phosphoethanolamine + a 1,2-diacyl-sn-glycerol. It carries out the reaction an N-acylsphinganine + a 1,2-diacyl-sn-glycero-3-phosphoethanolamine = an N-acylsphinganine-1-phosphoethanolamine + a 1,2-diacyl-sn-glycerol. It catalyses the reaction an N-acyl-(4R)-4-hydroxysphinganine + a 1,2-diacyl-sn-glycero-3-phosphoethanolamine = an N-acyl-(4R)-4-hydroxysphinganine-1-phosphoethanolamine + a 1,2-diacyl-sn-glycerol. The catalysed reaction is 1,2-dihexadecanoyl-sn-glycero-3-phosphocholine + an N-acylsphing-4-enine = 1,2-dihexadecanoyl-sn-glycerol + a sphingomyelin. The enzyme catalyses 1-(9Z-octadecenoyl)-2-acyl-sn-3-glycerol + a sphingomyelin = a 1-(9Z-octadecenoyl)-2-acyl-sn-glycero-3-phosphocholine + an N-acylsphing-4-enine. It carries out the reaction N-hexadecanoylsphinganine + a 1,2-diacyl-sn-glycero-3-phosphocholine = N-hexadecanoyl-sphinganine-1-phosphocholine + a 1,2-diacyl-sn-glycerol. It catalyses the reaction N-hexadecanoyl-(4R)-hydroxysphinganine + a 1,2-diacyl-sn-glycero-3-phosphocholine = N-hexadecanoyl-(4R)-hydroxysphinganine-phosphocholine + a 1,2-diacyl-sn-glycerol. The catalysed reaction is N-hexadecanoylsphinganine + a 1,2-diacyl-sn-glycero-3-phosphoethanolamine = N-hexadecanoyl-sphinganine-1-phosphoethanolamine + a 1,2-diacyl-sn-glycerol. The enzyme catalyses N-hexadecanoyl-(4R)-hydroxysphinganine + a 1,2-diacyl-sn-glycero-3-phosphoethanolamine = N-hexadecanoyl-(4R)-hydroxysphinganine-1-phosphoethanolamine + a 1,2-diacyl-sn-glycerol. Its pathway is sphingolipid metabolism. Sphingomyelin synthase that primarily contributes to sphingomyelin synthesis and homeostasis at the plasma membrane. Catalyzes the reversible transfer of phosphocholine moiety in sphingomyelin biosynthesis: in the forward reaction transfers phosphocholine head group of phosphatidylcholine (PC) on to ceramide (CER) to form ceramide phosphocholine (sphingomyelin, SM) and diacylglycerol (DAG) as by-product, and in the reverse reaction transfers phosphocholine from SM to DAG to form PC and CER. The direction of the reaction appears to depend on the levels of CER and DAG in the plasma membrane. Does not use free phosphorylcholine or CDP-choline as donors. Can also transfer phosphoethanolamine head group of phosphatidylethanolamine (PE) on to ceramide (CER) to form ceramide phosphoethanolamine (CPE). Regulates receptor-mediated signal transduction via mitogenic DAG and proapoptotic CER, as well as via SM, a structural component of membrane rafts that serve as platforms for signal transduction and protein sorting. To a lesser extent, plays a role in secretory transport via regulation of DAG pool at the Golgi apparatus and its downstream effects on PRKD1. Required for normal bone matrix mineralization. This Rattus norvegicus (Rat) protein is Phosphatidylcholine:ceramide cholinephosphotransferase 2 (Sgms2).